The primary structure comprises 365 residues: Anhydro-N-acetylmuramic acid kinase (365 aa).

Residue 9-16 (GTSLDGVD) coordinates ATP.

It belongs to the anhydro-N-acetylmuramic acid kinase family.

The catalysed reaction is 1,6-anhydro-N-acetyl-beta-muramate + ATP + H2O = N-acetyl-D-muramate 6-phosphate + ADP + H(+). It participates in amino-sugar metabolism; 1,6-anhydro-N-acetylmuramate degradation. Its pathway is cell wall biogenesis; peptidoglycan recycling. Functionally, catalyzes the specific phosphorylation of 1,6-anhydro-N-acetylmuramic acid (anhMurNAc) with the simultaneous cleavage of the 1,6-anhydro ring, generating MurNAc-6-P. Is required for the utilization of anhMurNAc either imported from the medium or derived from its own cell wall murein, and thus plays a role in cell wall recycling. The protein is Anhydro-N-acetylmuramic acid kinase of Rhodopseudomonas palustris (strain BisB18).